Consider the following 307-residue polypeptide: Methionyl-tRNA formyltransferase (307 aa).

108–111 (SLLP) serves as a coordination point for (6S)-5,6,7,8-tetrahydrofolate.

This sequence belongs to the Fmt family.

The catalysed reaction is L-methionyl-tRNA(fMet) + (6R)-10-formyltetrahydrofolate = N-formyl-L-methionyl-tRNA(fMet) + (6S)-5,6,7,8-tetrahydrofolate + H(+). In terms of biological role, attaches a formyl group to the free amino group of methionyl-tRNA(fMet). The formyl group appears to play a dual role in the initiator identity of N-formylmethionyl-tRNA by promoting its recognition by IF2 and preventing the misappropriation of this tRNA by the elongation apparatus. The chain is Methionyl-tRNA formyltransferase from Renibacterium salmoninarum (strain ATCC 33209 / DSM 20767 / JCM 11484 / NBRC 15589 / NCIMB 2235).